A 391-amino-acid polypeptide reads, in one-letter code: Probable sugar efflux transporter (391 aa).

12 helical membrane-spanning segments follow: residues 16–36, 51–71, 82–102, 110–130, 138–158, 170–190, 210–230, 247–267, 277–297, 300–320, 338–358, and 361–381; these read VFVF…PVAL, VGLM…PLML, LLFL…AWNF, MGIA…VIRV, QALG…LPLG, TFGV…KLLP, PLLV…FTTY, ITTL…FLFG, FIAF…VFKN, WVIF…TIAL, IFSG…SIVI, and LGLE…LFWL.

It belongs to the major facilitator superfamily. SotB (TC 2.A.1.2) family.

The protein localises to the cell inner membrane. Involved in the efflux of sugars. The physiological role may be the reduction of the intracellular concentration of toxic sugars or sugar metabolites. The polypeptide is Probable sugar efflux transporter (Helicobacter pylori (strain J99 / ATCC 700824) (Campylobacter pylori J99)).